Consider the following 182-residue polypeptide: D-lyxose ketol-isomerase (182 aa).

Residues His74, His76, Glu87, and His142 each contribute to the Mn(2+) site.

Belongs to the D-lyxose ketol-isomerase family. As to quaternary structure, homodimer. Mn(2+) serves as cofactor.

The enzyme catalyses D-lyxose = D-xylulose. Its function is as follows. Sugar isomerase that catalyzes the reversible isomerization of D-lyxose to D-xylulose. Shows weak activity with D-mannose and L-ribose. In Cohnella laeviribosi, this protein is D-lyxose ketol-isomerase.